The sequence spans 181 residues: ADP-ribosylation factor-like protein 1 (181 aa).

Residue Gly2 is the site of N-myristoyl glycine attachment. Residues Gly24–Thr31, Thr45–Thr48, Gly70, Asn126–Asp129, and Ala160–Thr161 contribute to the GTP site. Thr31 and Thr48 together coordinate Mg(2+).

Belongs to the small GTPase superfamily. Arf family. In terms of assembly, the GTP-bound form interacts with GOLGA1. The GTP-bound form interacts with GOLGA4 and RGPD8. The GTP-bound form directly interacts with ARFIP2. Binds to SCOC, preferentially in its GTP-bound form. May interact with UNC119. Interacts with ARFIP1; this interaction directs ARFIP1 to the trans-Golgi membranes. Interacts with ARFGEF1 (via N-terminus). In terms of tissue distribution, detected in heart, liver, lung and liver (at protein level). Detected in fetal heart, lung, liver and kidney. Detected in adult heart, placenta, lung, liver, skeletal muscle, kidney and pancreas.

It is found in the golgi apparatus membrane. The protein resides in the golgi apparatus. The protein localises to the trans-Golgi network membrane. It localises to the membrane. In terms of biological role, GTP-binding protein that recruits several effectors, such as golgins, arfaptins and Arf-GEFs to the trans-Golgi network, and modulates their functions at the Golgi complex. Plays thereby a role in a wide range of fundamental cellular processes, including cell polarity, innate immunity, or protein secretion mediated by arfaptins, which were shown to play a role in maintaining insulin secretion from pancreatic beta cells. This is ADP-ribosylation factor-like protein 1 (ARL1) from Homo sapiens (Human).